The chain runs to 501 residues: Ribose import ATP-binding protein RbsA (501 aa).

2 ABC transporter domains span residues 5–241 (LQLK…VGRK) and 252–495 (APGE…VGKL). 37–44 (GENGAGKS) is a binding site for ATP.

The protein belongs to the ABC transporter superfamily. Ribose importer (TC 3.A.1.2.1) family. The complex is composed of an ATP-binding protein (RbsA), two transmembrane proteins (RbsC) and a solute-binding protein (RbsB).

It is found in the cell inner membrane. It carries out the reaction D-ribose(out) + ATP + H2O = D-ribose(in) + ADP + phosphate + H(+). In terms of biological role, part of the ABC transporter complex RbsABC involved in ribose import. Responsible for energy coupling to the transport system. The protein is Ribose import ATP-binding protein RbsA of Salmonella typhi.